A 455-amino-acid polypeptide reads, in one-letter code: Probable galactarate/D-glucarate transporter GudP (455 aa).

Helical transmembrane passes span 19–39 (WFIVFMLFLVTSINYADRATL), 59–79 (YVFSAFGWAYVIGQLPGGWLL), 87–107 (IIALSIFFWSFFTLLQGAIGF), 108–128 (FSAGTAIILLFALRFLVGLSE), 153–173 (AFFNSAQYFAIVIFSPLMGWL), 177–197 (FGWHSVFVVMGIAGILLAVIW), 253–273 (IGVYIAQYCITTLTYFFLTWF), 289–309 (GFVASLPALCGFAGGVLGGIV), 320–340 (LTFARKVPIIAGMLLSCSMIV), 348–368 (WLVVVIMSLAFFGKGFGALGW), 386–406 (LFNTFGNIASITTPIIIGYIV), and 414–434 (GALVFVGANAIAAILSYLLLV).

Belongs to the major facilitator superfamily. Phthalate permease family.

The protein resides in the cell membrane. The enzyme catalyses galactarate(in) + H(+)(in) = galactarate(out) + H(+)(out). It catalyses the reaction D-glucarate(in) + H(+)(in) = D-glucarate(out) + H(+)(out). Functionally, probably involved in the uptake of galactarate and/or D-glucarate. This chain is Probable galactarate/D-glucarate transporter GudP, found in Bacillus subtilis (strain 168).